The following is a 277-amino-acid chain: Myelin proteolipid protein (277 aa).

At 1 to 10 the chain is on the cytoplasmic side; sequence MGLLECCARC. 3 S-palmitoyl cysteine lipidation sites follow: Cys-6, Cys-7, and Cys-10. Residues 11-36 traverse the membrane as a helical segment; it reads LVGAPFASLVATGLCFFGVALFCGCG. Over 37 to 59 the chain is Extracellular; it reads HEALTGTEKLIETYFSKNYQDYE. A helical membrane pass occupies residues 60–88; sequence YLINVIHAFQYVIYGTASFFFLYGALLLA. At 89–151 the chain is on the cytoplasmic side; sequence EGFYTTGAVR…LGKWLGHPDK (63 aa). Cys-109 carries the S-palmitoyl cysteine lipid modification. Phosphoserine is present on Ser-114. A phosphothreonine mark is found at Thr-116 and Thr-118. Cys-141 carries S-palmitoyl cysteine lipidation. Residues 152–178 form a helical membrane-spanning segment; the sequence is FVGITYALTVVWLLVFACSAVPVYIYF. Residues 179 to 238 lie on the Extracellular side of the membrane; the sequence is NTWTTCQSIAFPSKTSASIGSLCADARMYGVLPWNAFPGKVCGSNLLSICKTAEFQMTFH. 2 disulfide bridges follow: Cys-184–Cys-228 and Cys-201–Cys-220. Ser-199 carries O-palmitoyl serine lipidation. The chain crosses the membrane as a helical span at residues 239-268; that stretch reads LFIAAFVGAAATLISLLTFMIAATYNFAVL. Residues 269–277 are Cytoplasmic-facing; it reads KLMGRGTKF.

The protein belongs to the myelin proteolipid protein family.

The protein localises to the cell membrane. Its subcellular location is the myelin membrane. In terms of biological role, this is the major myelin protein from the central nervous system. It plays an important role in the formation or maintenance of the multilamellar structure of myelin. This Macaca fascicularis (Crab-eating macaque) protein is Myelin proteolipid protein (PLP1).